A 255-amino-acid polypeptide reads, in one-letter code: Indole-3-glycerol phosphate synthase (255 aa).

It belongs to the TrpC family.

It catalyses the reaction 1-(2-carboxyphenylamino)-1-deoxy-D-ribulose 5-phosphate + H(+) = (1S,2R)-1-C-(indol-3-yl)glycerol 3-phosphate + CO2 + H2O. Its pathway is amino-acid biosynthesis; L-tryptophan biosynthesis; L-tryptophan from chorismate: step 4/5. In Streptococcus thermophilus (strain CNRZ 1066), this protein is Indole-3-glycerol phosphate synthase.